The following is a 469-amino-acid chain: Ribulose bisphosphate carboxylase large chain (469 aa).

Lys-8 carries the N6,N6,N6-trimethyllysine modification. Substrate is bound by residues Asn-117 and Thr-167. Lys-169 (proton acceptor) is an active-site residue. Lys-171 is a binding site for substrate. Mg(2+) is bound by residues Lys-195, Asp-197, and Glu-198. Lys-195 is subject to N6-carboxylysine. The Proton acceptor role is filled by His-288. 3 residues coordinate substrate: Arg-289, His-321, and Ser-373.

It belongs to the RuBisCO large chain family. Type I subfamily. In terms of assembly, heterohexadecamer of 8 large chains and 8 small chains; disulfide-linked. The disulfide link is formed within the large subunit homodimers. Requires Mg(2+) as cofactor. In terms of processing, the disulfide bond which can form in the large chain dimeric partners within the hexadecamer appears to be associated with oxidative stress and protein turnover.

It is found in the plastid. The protein resides in the chloroplast. The catalysed reaction is 2 (2R)-3-phosphoglycerate + 2 H(+) = D-ribulose 1,5-bisphosphate + CO2 + H2O. It carries out the reaction D-ribulose 1,5-bisphosphate + O2 = 2-phosphoglycolate + (2R)-3-phosphoglycerate + 2 H(+). In terms of biological role, ruBisCO catalyzes two reactions: the carboxylation of D-ribulose 1,5-bisphosphate, the primary event in carbon dioxide fixation, as well as the oxidative fragmentation of the pentose substrate in the photorespiration process. Both reactions occur simultaneously and in competition at the same active site. The chain is Ribulose bisphosphate carboxylase large chain from Persicaria senticosa (Knotweed).